We begin with the raw amino-acid sequence, 262 residues long: Thioredoxin-like protein HCF164, chloroplastic (262 aa).

The N-terminal 54 residues, 1-54 (MAVVASRCTGLLLPDLGASLAGFRRRRSTPASSLSFRPRRARRRLGSLSCIAPP), are a transit peptide targeting the chloroplast. A disordered region spans residues 47-90 (SLSCIAPPDSAEPQTDEPAAKDDSTEDKAEASSASQDAGNPTFP). A compositionally biased stretch (basic and acidic residues) spans 64-76 (PAAKDDSTEDKAE). Positions 78–89 (SSASQDAGNPTF) are enriched in polar residues. The Thioredoxin domain occupies 78–230 (SSASQDAGNP…FLDNVVALAS (153 aa)). Active-site nucleophile residues include Cys-151 and Cys-154. The cysteines at positions 151 and 154 are disulfide-linked.

The protein belongs to the thioredoxin family.

The protein localises to the plastid. The protein resides in the chloroplast. Its function is as follows. Probable thiol-disulfide oxidoreductase that may participate in various redox reactions in the chloroplast. The sequence is that of Thioredoxin-like protein HCF164, chloroplastic from Oryza sativa subsp. japonica (Rice).